Consider the following 396-residue polypeptide: Elongation factor Tu (396 aa).

Positions 10–206 constitute a tr-type G domain; that stretch reads KPHVNIGTIG…AVDESVPEPV (197 aa). The interval 19 to 26 is G1; that stretch reads GHVDHGKT. 19 to 26 contacts GTP; the sequence is GHVDHGKT. Residue T26 coordinates Mg(2+). The interval 62-66 is G2; sequence GITIN. The segment at 83 to 86 is G3; sequence DAPG. Residues 83–87 and 138–141 contribute to the GTP site; these read DAPGH and NKSD. The G4 stretch occupies residues 138-141; the sequence is NKSD. The segment at 176–178 is G5; sequence SGL.

Belongs to the TRAFAC class translation factor GTPase superfamily. Classic translation factor GTPase family. EF-Tu/EF-1A subfamily. In terms of assembly, monomer.

It is found in the cytoplasm. It carries out the reaction GTP + H2O = GDP + phosphate + H(+). Functionally, GTP hydrolase that promotes the GTP-dependent binding of aminoacyl-tRNA to the A-site of ribosomes during protein biosynthesis. In Beutenbergia cavernae (strain ATCC BAA-8 / DSM 12333 / CCUG 43141 / JCM 11478 / NBRC 16432 / NCIMB 13614 / HKI 0122), this protein is Elongation factor Tu.